The sequence spans 41 residues: Large ribosomal subunit protein bL36 (41 aa).

Belongs to the bacterial ribosomal protein bL36 family.

The sequence is that of Large ribosomal subunit protein bL36 from Bartonella tribocorum (strain CIP 105476 / IBS 506).